The following is a 414-amino-acid chain: CCA-adding enzyme (414 aa).

The ATP site is built by G8 and R11. Residues G8 and R11 each coordinate CTP. D21 and D23 together coordinate Mg(2+). The ATP site is built by R92, R138, and R141. Residues R92, R138, and R141 each coordinate CTP.

It belongs to the tRNA nucleotidyltransferase/poly(A) polymerase family. Bacterial CCA-adding enzyme type 2 subfamily. Mg(2+) is required as a cofactor.

The catalysed reaction is a tRNA precursor + 2 CTP + ATP = a tRNA with a 3' CCA end + 3 diphosphate. The enzyme catalyses a tRNA with a 3' CCA end + 2 CTP + ATP = a tRNA with a 3' CCACCA end + 3 diphosphate. Catalyzes the addition and repair of the essential 3'-terminal CCA sequence in tRNAs without using a nucleic acid template. Adds these three nucleotides in the order of C, C, and A to the tRNA nucleotide-73, using CTP and ATP as substrates and producing inorganic pyrophosphate. tRNA 3'-terminal CCA addition is required both for tRNA processing and repair. Also involved in tRNA surveillance by mediating tandem CCA addition to generate a CCACCA at the 3' terminus of unstable tRNAs. While stable tRNAs receive only 3'-terminal CCA, unstable tRNAs are marked with CCACCA and rapidly degraded. The polypeptide is CCA-adding enzyme (Buchnera aphidicola subsp. Cinara cedri (strain Cc)).